The following is a 457-amino-acid chain: Chromosomal replication initiator protein DnaA (457 aa).

A domain I, interacts with DnaA modulators region spans residues 1–75; sequence MDAQLNNLWE…ALKIVTSRKF (75 aa). Residues 75 to 118 are domain II; the sequence is FKIEFYLESDLEEEKENEEKQKEEKKDNTNDVDGSIVVSDEMSA. Residues 87-108 are disordered; sequence EEKENEEKQKEEKKDNTNDVDG. Residues 91-103 are compositionally biased toward basic and acidic residues; that stretch reads NEEKQKEEKKDNT. Residues 119–335 are domain III, AAA+ region; the sequence is TLNPKYTFQS…GALIRIIAYS (217 aa). 4 residues coordinate ATP: Gly-163, Gly-165, Lys-166, and Thr-167. Residues 336 to 457 form a domain IV, binds dsDNA region; it reads SLTNRDVSVD…NDITKKLTQK (122 aa).

Belongs to the DnaA family. In terms of assembly, oligomerizes as a right-handed, spiral filament on DNA at oriC.

The protein localises to the cytoplasm. Its function is as follows. Plays an essential role in the initiation and regulation of chromosomal replication. ATP-DnaA binds to the origin of replication (oriC) to initiate formation of the DNA replication initiation complex once per cell cycle. Binds the DnaA box (a 9 base pair repeat at the origin) and separates the double-stranded (ds)DNA. Forms a right-handed helical filament on oriC DNA; dsDNA binds to the exterior of the filament while single-stranded (ss)DNA is stabiized in the filament's interior. The ATP-DnaA-oriC complex binds and stabilizes one strand of the AT-rich DNA unwinding element (DUE), permitting loading of DNA polymerase. After initiation quickly degrades to an ADP-DnaA complex that is not apt for DNA replication. Binds acidic phospholipids. The polypeptide is Chromosomal replication initiator protein DnaA (Clostridium perfringens (strain SM101 / Type A)).